Consider the following 1180-residue polypeptide: Chitin synthase 6 (1180 aa).

The next 2 helical transmembrane spans lie at 108–128 and 374–394; these read FTIC…IIAF and LLLA…IAAL. A glycan (N-linked (GlcNAc...) asparagine) is linked at asparagine 737. Helical transmembrane passes span 762-782, 795-815, and 822-842; these read FIVF…VYLV, IPYI…ILFL, and YIGW…FLPI. The DEK-C domain occupies 1118 to 1175; the sequence is DPTDEEIKSAVQTYLANQPSLMNVTKRSVREALVAAFPNAELSYKKSMINKAIDDTLS.

This sequence belongs to the chitin synthase family. Class V subfamily.

The protein localises to the cell membrane. The protein resides in the cytoplasmic vesicle membrane. It catalyses the reaction [(1-&gt;4)-N-acetyl-beta-D-glucosaminyl](n) + UDP-N-acetyl-alpha-D-glucosamine = [(1-&gt;4)-N-acetyl-beta-D-glucosaminyl](n+1) + UDP + H(+). Functionally, polymerizes chitin, a structural polymer of the cell wall and septum, by transferring the sugar moiety of UDP-GlcNAc to the non-reducing end of the growing chitin polymer. Plays a crucial role during infection and allows the fungus to overcome the resistance of the plant that checks growth of the pathogen and eventually eliminates it. The polypeptide is Chitin synthase 6 (Mycosarcoma maydis (Corn smut fungus)).